Reading from the N-terminus, the 793-residue chain is Serine/threonine-protein kinase CLA4 (793 aa).

Residues R8–V27 form a disordered region. In terms of domain architecture, PH spans Q56 to P168. A CRIB domain is found at V173–G186. Disordered stretches follow at residues A243 to T369 and Q383 to M476. Polar residues-rich tracts occupy residues T258–P276, G312–P337, and L355–T369. Residues F498 to F776 enclose the Protein kinase domain. ATP contacts are provided by residues A504–V512 and K545. D644 (proton acceptor) is an active-site residue.

It belongs to the protein kinase superfamily. STE Ser/Thr protein kinase family. STE20 subfamily.

The enzyme catalyses L-seryl-[protein] + ATP = O-phospho-L-seryl-[protein] + ADP + H(+). It carries out the reaction L-threonyl-[protein] + ATP = O-phospho-L-threonyl-[protein] + ADP + H(+). Required for hyphal maturation and for septation. The sequence is that of Serine/threonine-protein kinase CLA4 (CLA4) from Eremothecium gossypii (strain ATCC 10895 / CBS 109.51 / FGSC 9923 / NRRL Y-1056) (Yeast).